The sequence spans 178 residues: Arginine repressor (178 aa).

Positions 1-21 (MSQAQENEHAGPAVPQTRTAR) are disordered.

It belongs to the ArgR family.

The protein localises to the cytoplasm. The protein operates within amino-acid biosynthesis; L-arginine biosynthesis [regulation]. Its function is as follows. Regulates arginine biosynthesis genes. In Streptomyces avermitilis (strain ATCC 31267 / DSM 46492 / JCM 5070 / NBRC 14893 / NCIMB 12804 / NRRL 8165 / MA-4680), this protein is Arginine repressor.